A 139-amino-acid polypeptide reads, in one-letter code: Pre-hexon-linking protein VIII (139 aa).

Residues 35–69 constitute a propeptide that is removed on maturation; the sequence is GAAGDYFKSPTSARTLIPLTASCLRPDGVFQLGGG.

It belongs to the adenoviridae hexon-linking protein family. As to quaternary structure, interacts with the peripentonal hexons as well as the hexons in the facets. Part of a complex composed of the core-capsid bridging protein, the endosome lysis protein VI and the hexon-linking protein VIII; these interactions bridge the virus core to the capsid. In terms of processing, cleaved by the viral protease during virion maturation. May cause the middle segment to be shed from the capsid.

It is found in the host nucleus. It localises to the virion. Structural component of the virion that acts as a cement protein on the capsid interior and which glue the peripentonal hexons and group-of-nine hexons together. In Bovine adenovirus B serotype 3 (BAdV-3), this protein is Pre-hexon-linking protein VIII.